A 242-amino-acid chain; its full sequence is uncharacterized protein (242 aa).

Residues Thr-3–Ser-116 form the Response regulatory domain. Asp-54 is modified (4-aspartylphosphate). The HTH LytTR-type domain maps to Ile-139–Leu-240.

This is an uncharacterized protein from Vibrio vulnificus (strain CMCP6).